Consider the following 411-residue polypeptide: MSKPEDTSAAAAAPAGEAGNNLNIADGEIESNWETVIDNFDNMELKEELLRGVYAYGFERPSAIQARAIVPVIKGHDVIAQAQSGTGKTATFSIAILQRIDPSIKAVQALILAPTRELAQQIQKVVIALGDYMKIDCHACIGGTNVREDMAKLNEGAQVVVGTPGRVYDMINRRAFKTDQLKMFCLDEADEMLSRGFKDQMYEVFQLLPQDTQCVLLSATMPQEVLEVTKKFMRDPIRILVKRDELTLEGIKQFYVAVEKEDWKLDTLCDLYETVTITQAVIFCNTRRKVDWLTDKLTSREFTVSAMHGDMEQAQREVIMREFRSGSSRVLITTDLLARGIDVQQVSLVINYDLPSNRENYIHRIGRGGRFGRKGVAINFVTSDDVRMLRDIEQFYSTQIDEMPLNVADLI.

Residues 1-23 form a disordered region; sequence MSKPEDTSAAAAAPAGEAGNNLN. The span at 9-19 shows a compositional bias: low complexity; it reads AAAAAPAGEAG. Positions 38 to 66 match the Q motif motif; the sequence is DNFDNMELKEELLRGVYAYGFERPSAIQA. The region spanning 69-239 is the Helicase ATP-binding domain; that stretch reads IVPVIKGHDV…KKFMRDPIRI (171 aa). 82–89 contacts ATP; it reads AQSGTGKT. The short motif at 187-190 is the DEAD box element; it reads DEAD. One can recognise a Helicase C-terminal domain in the interval 250–411; that stretch reads GIKQFYVAVE…EMPLNVADLI (162 aa).

The protein belongs to the DEAD box helicase family. eIF4A subfamily. As to quaternary structure, component of the eIF4F complex, which composition varies with external and internal environmental conditions. It is composed of at least eIF4A, eIF4E and eIF4G.

The protein resides in the cytoplasm. The enzyme catalyses ATP + H2O = ADP + phosphate + H(+). Functionally, ATP-dependent RNA helicase which is a subunit of the eIF4F complex involved in cap recognition and is required for mRNA binding to ribosome. In the current model of translation initiation, eIF4A unwinds RNA secondary structures in the 5'-UTR of mRNAs which is necessary to allow efficient binding of the small ribosomal subunit, and subsequent scanning for the initiator codon. The sequence is that of ATP-dependent RNA helicase eIF4A (TIF1) from Mycosarcoma maydis (Corn smut fungus).